A 447-amino-acid polypeptide reads, in one-letter code: Glutamate--tRNA ligase 2 (447 aa).

The short motif at 8–18 (PSPTGYLHVGN) is the 'HIGH' region element. A 'KMSKS' region motif is present at residues 239 to 243 (KLSKR). K242 provides a ligand contact to ATP.

Belongs to the class-I aminoacyl-tRNA synthetase family. Glutamate--tRNA ligase type 1 subfamily. As to quaternary structure, monomer.

The protein localises to the cytoplasm. It carries out the reaction tRNA(Glu) + L-glutamate + ATP = L-glutamyl-tRNA(Glu) + AMP + diphosphate. Its function is as follows. Catalyzes the attachment of glutamate to tRNA(Glu) in a two-step reaction: glutamate is first activated by ATP to form Glu-AMP and then transferred to the acceptor end of tRNA(Glu). The polypeptide is Glutamate--tRNA ligase 2 (Granulibacter bethesdensis (strain ATCC BAA-1260 / CGDNIH1)).